Here is a 965-residue protein sequence, read N- to C-terminus: Valine--tRNA ligase (965 aa).

The span at M1–E12 shows a compositional bias: polar residues. A disordered region spans residues M1–E23. The 'HIGH' region signature appears at P56–H66. Positions K568–S572 match the 'KMSKS' region motif. K571 lines the ATP pocket. Residues M893–E960 adopt a coiled-coil conformation.

Belongs to the class-I aminoacyl-tRNA synthetase family. ValS type 1 subfamily. Monomer.

Its subcellular location is the cytoplasm. It carries out the reaction tRNA(Val) + L-valine + ATP = L-valyl-tRNA(Val) + AMP + diphosphate. Catalyzes the attachment of valine to tRNA(Val). As ValRS can inadvertently accommodate and process structurally similar amino acids such as threonine, to avoid such errors, it has a 'posttransfer' editing activity that hydrolyzes mischarged Thr-tRNA(Val) in a tRNA-dependent manner. In Photorhabdus laumondii subsp. laumondii (strain DSM 15139 / CIP 105565 / TT01) (Photorhabdus luminescens subsp. laumondii), this protein is Valine--tRNA ligase.